The chain runs to 387 residues: Small ribosomal subunit protein mS31 (387 aa).

Residues 1-56 (MLHRIPAFIRPRPFSGLPLSCGNREVSVAASVLPAAGSGAVRTENTIQRHFCTSRS) constitute a mitochondrion transit peptide. Disordered regions lie at residues 59-83 (SKKD…GEGK) and 203-228 (KSPS…SSLS). Polar residues-rich tracts occupy residues 66–76 (VPANETSQKAA) and 207–217 (MRVSSRPQHQI).

It belongs to the mitochondrion-specific ribosomal protein mS31 family. Component of the mitochondrial ribosome small subunit (28S) which comprises a 12S rRNA and about 30 distinct proteins.

It localises to the mitochondrion. The sequence is that of Small ribosomal subunit protein mS31 (Mrps31) from Rattus norvegicus (Rat).